The primary structure comprises 348 residues: Small ribosomal subunit biogenesis GTPase RsgA (348 aa).

The segment covering 1–14 has biased composition (basic residues); the sequence is MAKRKLSKQQKWRI. Residues 1–39 form a disordered region; sequence MAKRKLSKQQKWRIQKIQDERTKRATRKETQLESQLSGG. Over residues 16–31 the composition is skewed to basic and acidic residues; sequence KIQDERTKRATRKETQ. The CP-type G domain maps to 116–275; it reads FGQLKPIAAN…LIDSPGIREF (160 aa). Residues 163–166 and 217–225 each bind GTP; these read NKQD and GQSGVGKSS. Zn(2+) contacts are provided by cysteine 299, cysteine 304, histidine 306, and cysteine 312.

Belongs to the TRAFAC class YlqF/YawG GTPase family. RsgA subfamily. As to quaternary structure, monomer. Associates with 30S ribosomal subunit, binds 16S rRNA. It depends on Zn(2+) as a cofactor.

The protein resides in the cytoplasm. Functionally, one of several proteins that assist in the late maturation steps of the functional core of the 30S ribosomal subunit. Helps release RbfA from mature subunits. May play a role in the assembly of ribosomal proteins into the subunit. Circularly permuted GTPase that catalyzes slow GTP hydrolysis, GTPase activity is stimulated by the 30S ribosomal subunit. This chain is Small ribosomal subunit biogenesis GTPase RsgA, found in Hahella chejuensis (strain KCTC 2396).